The chain runs to 433 residues: Succinate--CoA ligase [GDP-forming] subunit beta, mitochondrial (433 aa).

A mitochondrion-targeting transit peptide spans 1–38; sequence IPAAPVAAQARKLLRDLAFRPPLLAARSQVVQLTPRRW. Residues 47–275 enclose the ATP-grasp domain; sequence KKLMSDNGVK…NAEFRQKDIF (229 aa). A GTP-binding site is contributed by Gln-58. Lys-74 carries the post-translational modification N6-acetyllysine. Lys-79 carries the post-translational modification N6-succinyllysine. GTP is bound at residue 91–93; sequence GRG. N6-acetyllysine occurs at positions 133 and 140. Residue Leu-147 coordinates GTP. Ser-162 carries the phosphoserine modification. N6-acetyllysine is present on residues Lys-201 and Lys-228. Positions 244 and 258 each coordinate Mg(2+). N6-acetyllysine occurs at positions 272 and 292. Asn-309 contacts substrate. Lys-339 carries the N6-succinyllysine modification. At Lys-348 the chain carries N6-acetyllysine. 366 to 368 contributes to the substrate binding site; sequence GIV. N6-acetyllysine occurs at positions 387 and 424.

It belongs to the succinate/malate CoA ligase beta subunit family. GTP-specific subunit beta subfamily. In terms of assembly, heterodimer of an alpha and a beta subunit. The beta subunit determines specificity for GTP. Requires Mg(2+) as cofactor.

The protein resides in the mitochondrion. It carries out the reaction GTP + succinate + CoA = succinyl-CoA + GDP + phosphate. The protein operates within carbohydrate metabolism; tricarboxylic acid cycle; succinate from succinyl-CoA (ligase route): step 1/1. In terms of biological role, GTP-specific succinyl-CoA synthetase functions in the citric acid cycle (TCA), coupling the hydrolysis of succinyl-CoA to the synthesis of GTP and thus represents the only step of substrate-level phosphorylation in the TCA. The beta subunit provides nucleotide specificity of the enzyme and binds the substrate succinate, while the binding sites for coenzyme A and phosphate are found in the alpha subunit. This is Succinate--CoA ligase [GDP-forming] subunit beta, mitochondrial from Sus scrofa (Pig).